We begin with the raw amino-acid sequence, 397 residues long: Golgi-associated RAB2 interactor protein 2 (397 aa).

2 disordered regions span residues 1–24 and 342–397; these read MKKS…PDSK and QTTL…KLLN. Composition is skewed to basic and acidic residues over residues 10-24, 353-369, and 376-397; these read TRID…PDSK, EKSK…RTMD, and KAEE…KLLN.

This sequence belongs to the GARIN family. In terms of assembly, interacts with CALM1.

The protein resides in the cell projection. The protein localises to the cilium. It localises to the flagellum. Seems to play a role in sperm motility. The protein is Golgi-associated RAB2 interactor protein 2 (GARIN2) of Bos taurus (Bovine).